Consider the following 416-residue polypeptide: Phosphoribosylamine--glycine ligase (416 aa).

The region spanning 107 to 303 is the ATP-grasp domain; sequence KDVMACAGVP…LAGLLMAAAT (197 aa). ATP is bound at residue 133 to 184; sequence LAAFGAPYVVKDDGLAAGKGVVVTDDVEAARAHANACDRVVVEEFLDGPEVS. 2 residues coordinate Mg(2+): E273 and N275.

This sequence belongs to the GARS family. Mg(2+) serves as cofactor. It depends on Mn(2+) as a cofactor.

It catalyses the reaction 5-phospho-beta-D-ribosylamine + glycine + ATP = N(1)-(5-phospho-beta-D-ribosyl)glycinamide + ADP + phosphate + H(+). It functions in the pathway purine metabolism; IMP biosynthesis via de novo pathway; N(1)-(5-phospho-D-ribosyl)glycinamide from 5-phospho-alpha-D-ribose 1-diphosphate: step 2/2. The sequence is that of Phosphoribosylamine--glycine ligase from Streptomyces coelicolor (strain ATCC BAA-471 / A3(2) / M145).